The chain runs to 370 residues: Germination protease (370 aa).

Positions 1 to 15 (MEKELDLSQYSVRTD) are excised as a propeptide.

This sequence belongs to the peptidase A25 family. In terms of assembly, homotetramer. In terms of processing, autoproteolytically processed. The inactive tetrameric zymogen termed p46 autoprocesses to a smaller form termed p41, which is active only during spore germination.

It catalyses the reaction Endopeptidase action with P4 Glu or Asp, P1 preferably Glu &gt; Asp, P1' hydrophobic and P2' Ala.. Initiates the rapid degradation of small, acid-soluble proteins during spore germination. The protein is Germination protease (gpr) of Priestia megaterium (strain ATCC 12872 / QMB1551) (Bacillus megaterium).